Reading from the N-terminus, the 1007-residue chain is MLSALIQNGMSKSGDPTDVENNTTNGSSSTTDNANDVGRGVNTENNSKLENDSSNAATITTSKQDPSAVDEATTPRSINTGASTVPEPDNTRRDSVSSNVSTATTESRRRSKVSRACDQCRKKKIKCDFIEGHDINPDQSCTGCRKIGEKCSFERIPLKRGPSKGYTRSNSQSRERRGSQRRRSSSEVSQKGKKPSVSNPVNAVNESKSEVDASLHPGQSATSTTNVSLHPLLQYLPGMNHSAVSASSPSALQQPFWKVPYHEYQNQRRPSLDSLASDSSQKPGGKTNQQQPLPSQSQPQSLQNIGNSRSNTGPLPTQDTFRNQRYYYQPSQDSVSEAGSDNRRGSSAIPPLLNPAIQLQQQQYSYSQFAIAQQQQQQQQQQQQQQLQLQQHLQQQHQLQQQQSLHSPQANTMNASTGISNGGFVPYSGNKGLPSGGHVLERTDSVASDAMSLNASPNIYTAEVESAPASPVQKKRKRSNRSSTSKKGKSTQQNLPATTPTLINYGQIADAQLIDTYYAYIHLRFPIIPINKDTLTNDLLLVNTQPISELHELNNYILLWFRNSLELLIRICLKDKESEEILYQQSTFVSAINECFQKIVDIHPRFRDLETQIDEKIATIYLVTFIILNCTLALVSYNNSFVLGMSVIIFNELKLWKNFIFGNWNTVTGHDKICLRLYFELNTFDSLQSCSFGVPKLMNLKLDETTASKLFYDEVSNDGTGQETDKWNVDEDPERIRIIVDNMELGYFLSRLCQARRSSFEKPLPLVGEHNENKTIPGLFRAFLSIKRQFTDTLLDLPDAEGKLPEMTPELVTRLSNMICDLTTTIHDLLKLNVEVNPTNCLELFPDNSMQTVDESSAHNSAAQSSDPSNIEVGTVSPYVIAIYKDLFNVVELIKNMPTSLIGCVMGTQAPNFDSQPLVLQLSQCMNNMLQITTFTSSLSPFKIFKHELNAQSKNKTIDAVPLWKQKMKSSLAPLQTAITPQEIMMAQFIDIAWCIADTEELGWFNQ.

The segment covering 1–11 has biased composition (polar residues); sequence MLSALIQNGMS. Residues 1 to 115 form a disordered region; that stretch reads MLSALIQNGM…ESRRRSKVSR (115 aa). The segment covering 21–33 has biased composition (low complexity); it reads NNTTNGSSSTTDN. Polar residues-rich tracts occupy residues 42–65, 74–83, and 96–105; these read NTENNSKLENDSSNAATITTSKQD, TPRSINTGAS, and VSSNVSTATT. The segment at residues 117–151 is a DNA-binding region (zn(2)-C6 fungal-type); sequence CDQCRKKKIKCDFIEGHDINPDQSCTGCRKIGEKC. Disordered stretches follow at residues 155–224, 267–350, 399–423, and 462–496; these read RIPL…ATST, QRRP…SAIP, LQQQQSLHSPQANTMNASTGISNGG, and AEVESAPASPVQKKRKRSNRSSTSKKGKSTQQNLP. Polar residues-rich tracts occupy residues 196-206 and 274-288; these read SVSNPVNAVNE and SLASDSSQKPGGKTN. A compositionally biased stretch (low complexity) spans 289–303; it reads QQQPLPSQSQPQSLQ. 3 stretches are compositionally biased toward polar residues: residues 304–323, 329–339, and 404–419; these read NIGNSRSNTGPLPTQDTFRN, QPSQDSVSEAG, and SLHSPQANTMNASTGI. The span at 473-489 shows a compositional bias: basic residues; it reads QKKRKRSNRSSTSKKGK.

It belongs to the EDS1/RGT1 family.

It localises to the nucleus. The protein resides in the cytoplasm. Glucose-responsive transcription factor that regulates expression of several glucose transporter (HXT) genes in response to glucose. In the absence of glucose, it functions as a transcriptional repressor, whereas high concentrations of glucose cause it to function as a transcriptional activator. In cells growing on low levels of glucose, has a neutral role, neither repressing nor activating transcription. This is Glucose transport transcription regulator RGT1 (RGT1) from Kluyveromyces lactis (strain ATCC 8585 / CBS 2359 / DSM 70799 / NBRC 1267 / NRRL Y-1140 / WM37) (Yeast).